Consider the following 87-residue polypeptide: uncharacterized protein (87 aa).

This is an uncharacterized protein from Ureaplasma parvum serovar 3 (strain ATCC 700970).